A 432-amino-acid chain; its full sequence is Sphingosine N-acyltransferase-like protein ALT7 (432 aa).

The chain crosses the membrane as a helical span at residues Ile-55–Tyr-75. A glycan (N-linked (GlcNAc...) asparagine) is linked at Asn-77. The next 7 membrane-spanning stretches (helical) occupy residues Phe-91–Leu-111, Phe-128–Ile-148, Gly-172–Val-192, Val-226–Leu-246, Leu-250–Ala-270, Gly-273–Gly-293, and Ala-338–Leu-358. In terms of domain architecture, TLC spans Lys-123–Gln-366. The disordered stretch occupies residues Ala-370–Gln-395.

The protein belongs to the sphingosine N-acyltransferase family.

The protein resides in the membrane. Its pathway is mycotoxin biosynthesis. Sphingosine N-acyltransferase-like protein; part of the gene cluster that mediates the biosynthesis of the host-selective toxins (HSTs) AAL-toxins, sphinganine-analog mycotoxins responsible for Alternaria stem canker on tomato by the tomato pathotype. The biosynthesis starts with the polyketide synthase ALT1-catalyzed C-16 carbon chain assembly from one starter acetyl-CoA unit with malonyl-CoA extender units. ALT1 also selectively transfers methyl groups at the first and the third cycle of chain elongation for AAL toxin. The C-16 polyketide chain is released from the enzyme by a nucleophilic attack of a carbanion, which is derived from R-carbon of glycin by decarboxylation, on the carbonyl carbon of polyketide acyl chain. This step is probably catalyzed by a pyridoxal 5'-phosphate-dependent aminoacyl transferase ALT4. The respective functions of the other enzymes encoded by the cluster have still to be elucidated. The sphingosine N-acyltransferase-like protein ALT7 seems not to act as a resistance/self-tolerance factor against the toxin in the toxin biosynthetic gene cluster, contrary to what is expected. The protein is Sphingosine N-acyltransferase-like protein ALT7 of Alternaria alternata (Alternaria rot fungus).